The following is a 351-amino-acid chain: Aromatic amino acid aminotransferase (351 aa).

Residue Lys215 is modified to N6-(pyridoxal phosphate)lysine.

The protein belongs to the class-II pyridoxal-phosphate-dependent aminotransferase family. Homodimer. Pyridoxal 5'-phosphate serves as cofactor.

It catalyses the reaction an aromatic L-alpha-amino acid + 2-oxoglutarate = an aromatic oxo-acid + L-glutamate. In terms of biological role, aminotransferase that catalyzes the conversion of aromatic amino acids and 2-oxoglutarate into corresponding aromatic oxo acids and L-glutamate. The polypeptide is Aromatic amino acid aminotransferase (Mycolicibacterium vanbaalenii (strain DSM 7251 / JCM 13017 / BCRC 16820 / KCTC 9966 / NRRL B-24157 / PYR-1) (Mycobacterium vanbaalenii)).